The following is a 406-amino-acid chain: Bifunctional enzyme IspD/IspF (406 aa).

The segment at 1–247 (MSLIRVNGEA…TLFFNPAKDT (247 aa)) is 2-C-methyl-D-erythritol 4-phosphate cytidylyltransferase. The interval 248–406 (FIGMGFDTHA…HVSMRYKQKL (159 aa)) is 2-C-methyl-D-erythritol 2,4-cyclodiphosphate synthase. Positions 254 and 256 each coordinate a divalent metal cation. 4-CDP-2-C-methyl-D-erythritol 2-phosphate contacts are provided by residues 254 to 256 (DTH) and 280 to 281 (HS). His288 lines the a divalent metal cation pocket. 4-CDP-2-C-methyl-D-erythritol 2-phosphate contacts are provided by residues 302–304 (DIG), 307–311 (FPDND), 378–381 (TTME), Phe385, and Lys388.

The protein in the N-terminal section; belongs to the IspD/TarI cytidylyltransferase family. IspD subfamily. It in the C-terminal section; belongs to the IspF family. The cofactor is a divalent metal cation.

It carries out the reaction 2-C-methyl-D-erythritol 4-phosphate + CTP + H(+) = 4-CDP-2-C-methyl-D-erythritol + diphosphate. The enzyme catalyses 4-CDP-2-C-methyl-D-erythritol 2-phosphate = 2-C-methyl-D-erythritol 2,4-cyclic diphosphate + CMP. The protein operates within isoprenoid biosynthesis; isopentenyl diphosphate biosynthesis via DXP pathway; isopentenyl diphosphate from 1-deoxy-D-xylulose 5-phosphate: step 2/6. It functions in the pathway isoprenoid biosynthesis; isopentenyl diphosphate biosynthesis via DXP pathway; isopentenyl diphosphate from 1-deoxy-D-xylulose 5-phosphate: step 4/6. Bifunctional enzyme that catalyzes the formation of 4-diphosphocytidyl-2-C-methyl-D-erythritol from CTP and 2-C-methyl-D-erythritol 4-phosphate (MEP) (IspD), and catalyzes the conversion of 4-diphosphocytidyl-2-C-methyl-D-erythritol 2-phosphate (CDP-ME2P) to 2-C-methyl-D-erythritol 2,4-cyclodiphosphate (ME-CPP) with a corresponding release of cytidine 5-monophosphate (CMP) (IspF). The protein is Bifunctional enzyme IspD/IspF of Helicobacter pylori (strain ATCC 700392 / 26695) (Campylobacter pylori).